We begin with the raw amino-acid sequence, 155 residues long: MKLQLVAVGTKMPAWVETGFTEYLRRFPKDMPFELVEIPAGKRGKNADIKRILEKEGEQMLAAAGKNRIVTLDIPGKPWDTPQLAAELERWKLDGRDVSLLIGGPEGLSPACKAAAEQSWSLSALTLPHPLVRVLVAESLYRAWSITTNHPYHRE.

S-adenosyl-L-methionine-binding positions include Leu72, Gly103, and 122-127; that span reads LSALTL.

The protein belongs to the RNA methyltransferase RlmH family. In terms of assembly, homodimer.

The protein resides in the cytoplasm. The catalysed reaction is pseudouridine(1915) in 23S rRNA + S-adenosyl-L-methionine = N(3)-methylpseudouridine(1915) in 23S rRNA + S-adenosyl-L-homocysteine + H(+). In terms of biological role, specifically methylates the pseudouridine at position 1915 (m3Psi1915) in 23S rRNA. This chain is Ribosomal RNA large subunit methyltransferase H, found in Escherichia fergusonii (strain ATCC 35469 / DSM 13698 / CCUG 18766 / IAM 14443 / JCM 21226 / LMG 7866 / NBRC 102419 / NCTC 12128 / CDC 0568-73).